The chain runs to 456 residues: Bifunctional protein GlmU (456 aa).

The interval 1-229 (MLNNAMSVVI…LSEVEGVNNR (229 aa)) is pyrophosphorylase. Residues 11–14 (LAAG), lysine 25, glutamine 76, 81–82 (GT), 103–105 (YGD), glycine 140, glutamate 154, asparagine 169, and asparagine 227 each bind UDP-N-acetyl-alpha-D-glucosamine. Aspartate 105 is a Mg(2+) binding site. Mg(2+) is bound at residue asparagine 227. The interval 230–250 (LQLSRLERVYQSEQAEKLLLA) is linker. The tract at residues 251 to 456 (GVMLRDPARF…EGWRRPVKKK (206 aa)) is N-acetyltransferase. Residues arginine 333 and lysine 351 each contribute to the UDP-N-acetyl-alpha-D-glucosamine site. Histidine 363 functions as the Proton acceptor in the catalytic mechanism. Residues tyrosine 366 and asparagine 377 each coordinate UDP-N-acetyl-alpha-D-glucosamine. Acetyl-CoA contacts are provided by residues alanine 380, 386–387 (NY), serine 405, alanine 423, and arginine 440.

In the N-terminal section; belongs to the N-acetylglucosamine-1-phosphate uridyltransferase family. It in the C-terminal section; belongs to the transferase hexapeptide repeat family. In terms of assembly, homotrimer. Mg(2+) serves as cofactor.

Its subcellular location is the cytoplasm. It catalyses the reaction alpha-D-glucosamine 1-phosphate + acetyl-CoA = N-acetyl-alpha-D-glucosamine 1-phosphate + CoA + H(+). It carries out the reaction N-acetyl-alpha-D-glucosamine 1-phosphate + UTP + H(+) = UDP-N-acetyl-alpha-D-glucosamine + diphosphate. It participates in nucleotide-sugar biosynthesis; UDP-N-acetyl-alpha-D-glucosamine biosynthesis; N-acetyl-alpha-D-glucosamine 1-phosphate from alpha-D-glucosamine 6-phosphate (route II): step 2/2. It functions in the pathway nucleotide-sugar biosynthesis; UDP-N-acetyl-alpha-D-glucosamine biosynthesis; UDP-N-acetyl-alpha-D-glucosamine from N-acetyl-alpha-D-glucosamine 1-phosphate: step 1/1. The protein operates within bacterial outer membrane biogenesis; LPS lipid A biosynthesis. Catalyzes the last two sequential reactions in the de novo biosynthetic pathway for UDP-N-acetylglucosamine (UDP-GlcNAc). The C-terminal domain catalyzes the transfer of acetyl group from acetyl coenzyme A to glucosamine-1-phosphate (GlcN-1-P) to produce N-acetylglucosamine-1-phosphate (GlcNAc-1-P), which is converted into UDP-GlcNAc by the transfer of uridine 5-monophosphate (from uridine 5-triphosphate), a reaction catalyzed by the N-terminal domain. The polypeptide is Bifunctional protein GlmU (Escherichia coli O127:H6 (strain E2348/69 / EPEC)).